Consider the following 221-residue polypeptide: UPF0502 protein PLES_16071 (221 aa).

This sequence belongs to the UPF0502 family.

The sequence is that of UPF0502 protein PLES_16071 from Pseudomonas aeruginosa (strain LESB58).